Reading from the N-terminus, the 346-residue chain is MDSTEDLDYPQIIFQYSNGFLVSKVMFTACELGVFDLLLQSGRPLSLDVIAARLGTSIMGMERLLDACVGLKLLAVELRREGAFYRNTEISNIYLTKSSPKSQYHIMMYYSNTVYLCWHYLTDAVREGRNQYERAFGISSKDLFGARYRSEEEMLKFLAGQNSIWSICGRDVLTAFDLSPFTQIYDLGGGGGALAQECVFLYPNCTVTIYDLPKVVQVAKERLVPPEERRIAFHEGDFFKDSIPEADLYILSKILHDWDDKKCRQLLAEVYKACRPGGGVLLVESLLSEDRSGPVETQLYSLNMLVQTEGKERTAVEYSELLGAAGFREVQVRRTGKLYDAVLGRK.

Residues tyrosine 148, tryptophan 165, aspartate 211, 236 to 238 (GDF), and lysine 253 contribute to the S-adenosyl-L-methionine site. Catalysis depends on histidine 256, which acts as the Proton donor/acceptor. Aspartate 257, asparagine 303, and glutamine 307 together coordinate substrate.

Belongs to the class I-like SAM-binding methyltransferase superfamily. Cation-independent O-methyltransferase family. Homodimer. Expressed in pineal gland and retina.

It catalyses the reaction N-acetylserotonin + S-adenosyl-L-methionine = melatonin + S-adenosyl-L-homocysteine + H(+). It participates in aromatic compound metabolism; melatonin biosynthesis; melatonin from serotonin: step 1/2. In terms of biological role, catalyzes the transfer of a methyl group onto N-acetylserotonin, producing melatonin (N-acetyl-5-methoxytryptamine). The protein is Acetylserotonin O-methyltransferase (ASMT) of Gallus gallus (Chicken).